The sequence spans 147 residues: AP-2 complex subunit sigma (147 aa).

Belongs to the adaptor complexes small subunit family. In terms of assembly, adaptor protein complex 2 (AP-2) is a heterotetramer composed of two large adaptins (alpha-type subunit APL3 and beta-type subunit APL1), a medium chain (mu-type subunit APM4) and a small adaptin (sigma-type subunit APS2). Interacts with APL1.

It is found in the cell membrane. Its subcellular location is the membrane. It localises to the coated pit. Functionally, component of the adaptor complexes which link clathrin to receptors in coated vesicles. Clathrin-associated protein complexes are believed to interact with the cytoplasmic tails of membrane proteins, leading to their selection and concentration. The chain is AP-2 complex subunit sigma (APS2) from Saccharomyces cerevisiae (strain ATCC 204508 / S288c) (Baker's yeast).